The sequence spans 425 residues: Glucose-6-phosphate 1-dehydrogenase (425 aa).

NADP(+) is bound by residues Arg44 and Lys135. Residues His165, Lys169, Glu201, and Asp220 each contribute to the substrate site. The Proton acceptor role is filled by His225. Lys311 serves as a coordination point for substrate.

This sequence belongs to the glucose-6-phosphate dehydrogenase family.

It carries out the reaction D-glucose 6-phosphate + NADP(+) = 6-phospho-D-glucono-1,5-lactone + NADPH + H(+). It participates in carbohydrate degradation; pentose phosphate pathway; D-ribulose 5-phosphate from D-glucose 6-phosphate (oxidative stage): step 1/3. Catalyzes the oxidation of glucose 6-phosphate to 6-phosphogluconolactone. The sequence is that of Glucose-6-phosphate 1-dehydrogenase from Helicobacter pylori (strain J99 / ATCC 700824) (Campylobacter pylori J99).